The primary structure comprises 178 residues: Small ribosomal subunit protein uS5 (178 aa).

The S5 DRBM domain maps to 13 to 76 (LEERVVQINR…EAAKRNLIRV (64 aa)). The segment at 156 to 178 (ASRRDMTPQELMERRTRRETEAA) is disordered.

Belongs to the universal ribosomal protein uS5 family. In terms of assembly, part of the 30S ribosomal subunit. Contacts proteins S4 and S8.

In terms of biological role, with S4 and S12 plays an important role in translational accuracy. Located at the back of the 30S subunit body where it stabilizes the conformation of the head with respect to the body. In Chloroflexus aurantiacus (strain ATCC 29364 / DSM 637 / Y-400-fl), this protein is Small ribosomal subunit protein uS5.